The chain runs to 182 residues: Adenine phosphoribosyltransferase (182 aa).

An AMP-binding site is contributed by 133–137 (ATGGS).

This sequence belongs to the purine/pyrimidine phosphoribosyltransferase family. In terms of assembly, homodimer. Requires Mg(2+) as cofactor.

The protein localises to the cytoplasm. It localises to the nucleus. The catalysed reaction is AMP + diphosphate = 5-phospho-alpha-D-ribose 1-diphosphate + adenine. The protein operates within purine metabolism; AMP biosynthesis via salvage pathway; AMP from adenine: step 1/1. Functionally, catalyzes a salvage reaction resulting in the formation of AMP, that is energically less costly than de novo synthesis. The polypeptide is Adenine phosphoribosyltransferase (APT1) (Yarrowia lipolytica (strain CLIB 122 / E 150) (Yeast)).